The chain runs to 505 residues: MGRVVAELVSSLLGLWLLLCSCGCPEGAELRAPPDKIAIIGAGIGGTSAAYYLRQKFGKDVKIDLFEREEVGGRLATMMVQGQEYEAGGSVIHPLNLRMKRFVKDLGLSTVQASGGLLGIYNGETLVFEESNWFIINVIKLVWRYGFQSLRMHMWVEDVLDKFMRIYRYQSHDYAFSSVEKLLHALGGDDFLGMLNRTLLETLQKAGFSEKFLNEMIAPVMRVNYGQSTDINAFVGAVSLSCSDSGLWAVEGGNKLVCSGLLQASKSNLISGSVMYIEEKTKTKHTGNPTKMYEVVYQIGTETRSDFYDIVLVATPLNRKMSNITFLNFDPPIEEFHQYYQHIVTTLVKGELNTSIFSSRPIDKFGLNTVLTTDNSDLFINSIGIVSSVREKEDPEPSTDGTYVWKIFSQETLTKAQILKLFLSYDYAVKKPWLAYPHYKPPEKCPSIILHDRLYYLNGIECAASAMEMSAIAAHNAALLAYHRWNRHTDMIDQDGLYEKLKTEL.

Positions 1-27 (MGRVVAELVSSLLGLWLLLCSCGCPEG) are cleaved as a signal peptide. Asn196, Asn323, and Asn353 each carry an N-linked (GlcNAc...) asparagine glycan.

The protein belongs to the prenylcysteine oxidase family. The cofactor is FAD.

The protein localises to the lysosome. It carries out the reaction an S-polyprenyl-L-cysteine + O2 + H2O = a polyprenal + L-cysteine + H2O2. The catalysed reaction is S-(2E,6E)-farnesyl-L-cysteine + O2 + H2O = (2E,6E)-farnesal + L-cysteine + H2O2. It catalyses the reaction [(2E,6E,10E)-geranylgeranyl]-L-cysteine + O2 + H2O = (2E,6E,10E)-geranylgeranial + L-cysteine + H2O2. In terms of biological role, prenylcysteine oxidase that cleaves the thioether bond of prenyl-L-cysteines, such as farnesylcysteine and geranylgeranylcysteine. Only active against free prenylcysteines and not prenylcysteine residues within prenylated proteins or peptides. Involved in the final step in the degradation of prenylated proteins, by degrading prenylcysteines after the protein has been degraded. In Pongo abelii (Sumatran orangutan), this protein is Prenylcysteine oxidase 1.